A 354-amino-acid polypeptide reads, in one-letter code: Divinyl chlorophyll a/b light-harvesting protein PcbG (354 aa).

6 helical membrane passes run 27-47, 65-85, 88-108, 201-221, 241-261, and 308-328; these read FIAAHAGHTGLISFAAGASTL, IFLAHLASIGIGFDDAGVWTG, VASVAIVHIIASLVYAGGALS, VLGGHAFLAFVEITGGAFHIA, AVLSFSLAGIGWMAIVAAFWC, and LTNVHYYFGFFFLQGHLWHAI.

The protein belongs to the PsbB/PsbC family. IsiA/Pcb subfamily. In terms of assembly, the antenna complex consists of divinyl chlorophylls (a and b) and divinyl chlorophyll a/b binding proteins and binds more divinyl chlorophyll b than does the antenna complex from high-light-adapted Prochlorococcus. Requires divinyl chlorophyll a as cofactor. Divinyl chlorophyll b serves as cofactor.

It is found in the cellular thylakoid membrane. The antenna complex functions as a light receptor, it captures and delivers excitation energy to photosystems II and I. The Prochlorales pcb genes are not related to higher plant LHCs. This chain is Divinyl chlorophyll a/b light-harvesting protein PcbG (pcbG), found in Prochlorococcus marinus (strain NATL2A).